A 412-amino-acid chain; its full sequence is 43 kDa receptor-associated protein of the synapse (412 aa).

The N-myristoyl glycine moiety is linked to residue glycine 2. TPR repeat units follow at residues 6–39 (TKQQ…SADP), 83–116 (TEGY…QGTT), 123–156 (GQVS…AHNN), 163–196 (CRVC…VNDY), 206–239 (AMSQ…ALQH), 246–279 (ALCL…MTEI), and 286–319 (IQVL…AEGL). Tyrosine 196 bears the Phosphotyrosine mark. The segment at 363–403 (CGMCGESIGEKNNQLQALPCSHFFHLKCLQTNGTRGCPNCR) adopts an RING-type zinc-finger fold.

It belongs to the RAPsyn family. As to expression, expressed in muscle fibers and in neurons.

It is found in the cell membrane. It localises to the postsynaptic cell membrane. The protein resides in the cytoplasm. The protein localises to the cytoskeleton. Functionally, postsynaptic protein required for clustering of nicotinic acetylcholine receptors (nAChRs) at the neuromuscular junction. It may link the receptor to the underlying postsynaptic cytoskeleton, possibly by direct association with actin or spectrin. This Gallus gallus (Chicken) protein is 43 kDa receptor-associated protein of the synapse (RAPSN).